Consider the following 126-residue polypeptide: Small ribosomal subunit protein bS6 (126 aa).

Residues 104-126 (LARRDRGDRPERPREDFGAQAQA) form a disordered region. Positions 105–120 (ARRDRGDRPERPREDF) are enriched in basic and acidic residues.

This sequence belongs to the bacterial ribosomal protein bS6 family.

In terms of biological role, binds together with bS18 to 16S ribosomal RNA. The sequence is that of Small ribosomal subunit protein bS6 from Caulobacter vibrioides (strain ATCC 19089 / CIP 103742 / CB 15) (Caulobacter crescentus).